The chain runs to 379 residues: MSELSFDAPVWHHGKALRKGYTTGSCATAAAKVAALMVLRQHLIHQVSIVTPSGVTLCLNVESPHIEGQQAIAAIRKDGGDDVDATHGMLIFARVTLNDSGEITLTGGEGIGTVTRKGVGLPLGSAAINRTPRHTIESAVREAIGPARGADVEIFAPEGEARAQKTYNSRLGILGGISIIGTTGIVTPMSEESWKRSLSLELEIKRASGLMRVILVPGNHGERFVREQMGVDTQAVVTMSNFVGYMIEEAVRLGFRQIVLVGHPGKLIKIAAGIFHTHSHIADARMETLVAHLALLGAPLELLTLVGDCDTTEAAMEHIEAYGFGHIYNHLAKRICWRVMQMLRFTKTPPVCDAILFSFDNHILGSNRPVDEIAKELQC.

This sequence belongs to the CbiD family.

The catalysed reaction is Co-precorrin-5B + S-adenosyl-L-methionine = Co-precorrin-6A + S-adenosyl-L-homocysteine. Its pathway is cofactor biosynthesis; adenosylcobalamin biosynthesis; cob(II)yrinate a,c-diamide from sirohydrochlorin (anaerobic route): step 6/10. Functionally, catalyzes the methylation of C-1 in cobalt-precorrin-5B to form cobalt-precorrin-6A. This is Cobalt-precorrin-5B C(1)-methyltransferase from Salmonella arizonae (strain ATCC BAA-731 / CDC346-86 / RSK2980).